We begin with the raw amino-acid sequence, 166 residues long: Phosphopantetheine adenylyltransferase (166 aa).

Ser9 provides a ligand contact to substrate. Residues 9-10 (SF) and His17 each bind ATP. Substrate-binding residues include Lys41, Thr74, and Arg88. Residues 89 to 91 (GLR), Glu99, and 124 to 130 (DSFISSS) contribute to the ATP site.

The protein belongs to the bacterial CoaD family. As to quaternary structure, homohexamer. The cofactor is Mg(2+).

The protein localises to the cytoplasm. The enzyme catalyses (R)-4'-phosphopantetheine + ATP + H(+) = 3'-dephospho-CoA + diphosphate. Its pathway is cofactor biosynthesis; coenzyme A biosynthesis; CoA from (R)-pantothenate: step 4/5. Functionally, reversibly transfers an adenylyl group from ATP to 4'-phosphopantetheine, yielding dephospho-CoA (dPCoA) and pyrophosphate. The polypeptide is Phosphopantetheine adenylyltransferase (Lactobacillus gasseri (strain ATCC 33323 / DSM 20243 / BCRC 14619 / CIP 102991 / JCM 1131 / KCTC 3163 / NCIMB 11718 / NCTC 13722 / AM63)).